We begin with the raw amino-acid sequence, 230 residues long: Ribonuclease 3 (230 aa).

One can recognise an RNase III domain in the interval 19–134; the sequence is ELLTIALTHR…LLGAIYLEHG (116 aa). Mg(2+) is bound at residue Glu-44. Asp-48 is a catalytic residue. Mg(2+) contacts are provided by Asp-120 and Glu-123. Residues 161 to 229 form the DRBM domain; it reads DWKSSLQELT…AASAYKTLDE (69 aa).

Belongs to the ribonuclease III family. In terms of assembly, homodimer. It depends on Mg(2+) as a cofactor.

The protein localises to the cytoplasm. The catalysed reaction is Endonucleolytic cleavage to 5'-phosphomonoester.. Digests double-stranded RNA. Involved in the processing of primary rRNA transcript to yield the immediate precursors to the all rRNAs (23S, 16S and 5S). Processes some mRNAs, and tRNAs when they are encoded in the rRNA operon. Processes pre-crRNA and tracrRNA of type II CRISPR loci if present in the organism. The chain is Ribonuclease 3 (rnc) from Mycolicibacterium smegmatis (strain ATCC 700084 / mc(2)155) (Mycobacterium smegmatis).